The chain runs to 542 residues: Phosphoenolpyruvate carboxykinase (ATP) (542 aa).

Residues Arg-67, Tyr-208, and Lys-214 each contribute to the substrate site. ATP-binding positions include Lys-214, His-233, and 249 to 257 (GLSGTGKTT). 2 residues coordinate Mn(2+): Lys-214 and His-233. Residue Asp-270 coordinates Mn(2+). ATP-binding positions include Glu-298, Arg-334, 450 to 451 (RI), and Thr-456. Substrate is bound at residue Arg-334.

It belongs to the phosphoenolpyruvate carboxykinase (ATP) family. Monomer. Mn(2+) serves as cofactor.

The protein localises to the cytoplasm. The catalysed reaction is oxaloacetate + ATP = phosphoenolpyruvate + ADP + CO2. It functions in the pathway carbohydrate biosynthesis; gluconeogenesis. Its function is as follows. Involved in the gluconeogenesis. Catalyzes the conversion of oxaloacetate (OAA) to phosphoenolpyruvate (PEP) through direct phosphoryl transfer between the nucleoside triphosphate and OAA. This Vibrio vulnificus (strain CMCP6) protein is Phosphoenolpyruvate carboxykinase (ATP).